A 372-amino-acid chain; its full sequence is NAD(P)H-quinone oxidoreductase subunit 1 (372 aa).

8 consecutive transmembrane segments (helical) span residues 27-47 (IIWL…GVLV), 97-117 (ILFT…WLIV), 128-148 (VGIG…GLLM), 176-196 (LALS…IDIV), 204-224 (ILSW…ICAL), 266-286 (ILSA…PIPV), 308-328 (SIGI…AILL), and 347-367 (FLLP…LAFP).

The protein belongs to the complex I subunit 1 family. In terms of assembly, NDH-1 is composed of at least 11 different subunits.

Its subcellular location is the cellular thylakoid membrane. It carries out the reaction a plastoquinone + NADH + (n+1) H(+)(in) = a plastoquinol + NAD(+) + n H(+)(out). It catalyses the reaction a plastoquinone + NADPH + (n+1) H(+)(in) = a plastoquinol + NADP(+) + n H(+)(out). NDH-1 shuttles electrons from an unknown electron donor, via FMN and iron-sulfur (Fe-S) centers, to quinones in the respiratory and/or the photosynthetic chain. The immediate electron acceptor for the enzyme in this species is believed to be plastoquinone. Couples the redox reaction to proton translocation, and thus conserves the redox energy in a proton gradient. This is NAD(P)H-quinone oxidoreductase subunit 1 from Prochlorococcus marinus (strain MIT 9312).